Reading from the N-terminus, the 973-residue chain is FHF complex subunit HOOK-interacting protein 1B (973 aa).

Disordered regions lie at residues 466 to 493, 510 to 547, and 573 to 647; these read SSPSRPEHASWARGPGSPSVDSSSVVTV, SLGGSESPAPAPRSPGLATSPASSPGRRPSPVEEPGEL, and SAPY…EGAK. S467 bears the Phosphoserine mark. Low complexity predominate over residues 482–493; that stretch reads SPSVDSSSVVTV. A phosphoserine mark is found at S510, S523, S529, and S533. 2 stretches are compositionally biased toward low complexity: residues 529–538 and 622–639; these read SPASSPGRRP and GARESLGHLPPPQLNGLP. S859 and S898 each carry phosphoserine.

This sequence belongs to the FHIP family. In terms of assembly, component of the FTS/Hook/FHIP complex (FHF complex), composed of AKTIP/FTS, FHIP1B, and one or more members of the Hook family of proteins HOOK1, HOOK2, and HOOK3. The FHF complex associates with the homotypic vesicular sorting complex (the HOPS complex).

Component of the FTS/Hook/FHIP complex (FHF complex). The FHF complex may function to promote vesicle trafficking and/or fusion via the homotypic vesicular protein sorting complex (the HOPS complex). FHF complex promotes the distribution of AP-4 complex to the perinuclear area of the cell. The polypeptide is FHF complex subunit HOOK-interacting protein 1B (FHIP1B) (Bos taurus (Bovine)).